A 184-amino-acid chain; its full sequence is Major fimbrial subunit (184 aa).

The signal sequence occupies residues 1-22 (MKLSKIALAAALVFGINSVATA). The cysteines at positions 49 and 88 are disulfide-linked.

The protein belongs to the fimbrial protein family.

The protein localises to the fimbrium. Its function is as follows. Major structural component of PMF fimbriae. In Proteus mirabilis (strain HI4320), this protein is Major fimbrial subunit (pmfA).